A 302-amino-acid polypeptide reads, in one-letter code: Acetylesterase (302 aa).

A signal peptide spans 1–21; the sequence is MGRFLTTTALALLATGGAATA. Residues asparagine 84 and asparagine 101 are each glycosylated (N-linked (GlcNAc...) asparagine).

Belongs to the carbohydrate esterase CE16 family.

The protein localises to the secreted. It catalyses the reaction an acetyl ester + H2O = an aliphatic alcohol + acetate + H(+). Its function is as follows. Acetyl esterase that acts as an exo-deacetylase. Liberates acetic acid from xylo-oligomers. In Thermothelomyces thermophilus (Myceliophthora thermophila), this protein is Acetylesterase.